The chain runs to 2529 residues: Zinc finger FYVE domain-containing protein 26 (2529 aa).

3 disordered regions span residues 584–650 (HLPE…PGPH), 689–709 (SSHRTPEETKLPEDQSCSAAR), and 733–810 (VTSN…RFQT). Phosphoserine occurs at positions 605 and 609. Residues 689–701 (SSHRTPEETKLPE) are compositionally biased toward basic and acidic residues. Residues 755–765 (SSLRRGRRTRR) show a composition bias toward basic residues. Residues 778 to 796 (SLEGTSSELSTSTSEGSLS) show a composition bias toward low complexity. Ser791 is subject to Phosphoserine. Over residues 797 to 810 (AVSGQVESDSRFQT) the composition is skewed to polar residues. Positions 859-884 (MFVERYQEVIQELARVEHKIENQNSD) form a coiled coil. The interval 1258-1286 (GLPLSTLGSPRPSENPSAERKSHSSPKDS) is disordered. A compositionally biased stretch (polar residues) spans 1263–1273 (TLGSPRPSENP). Residues 1274 to 1283 (SAERKSHSSP) are compositionally biased toward basic and acidic residues. Residues 1488–1515 (VSDMAVQEELKSELQRKLMELRVYQKIL) adopt a coiled-coil conformation. Phosphoserine is present on residues Ser1732, Ser1754, Ser1770, and Ser1772. The interval 1762 to 1799 (APGSALVRSPSPKERAFPQTQPPVEFVPPETPPARDQW) is disordered. An FYVE-type zinc finger spans residues 1802–1862 (DETESVCMVC…VCDQCYSYYN (61 aa)). Zn(2+) is bound by residues Cys1808, Cys1811, Cys1825, Cys1828, Cys1833, Cys1836, Cys1854, and Cys1857. Positions 1865 to 1884 (TPEESPCQSEVPDSAKNESP) are disordered.

Belongs to the ZFYVE26 family. In terms of assembly, interacts with AP5Z1, AP5B1, AP5S1 and SPG11. Interacts with TTC19 and KIF13A.

The protein resides in the cytoplasm. It localises to the cytoskeleton. Its subcellular location is the microtubule organizing center. It is found in the centrosome. The protein localises to the midbody. Functionally, phosphatidylinositol 3-phosphate-binding protein required for the abscission step in cytokinesis: recruited to the midbody during cytokinesis and acts as a regulator of abscission. May also be required for efficient homologous recombination DNA double-strand break repair. This Mus musculus (Mouse) protein is Zinc finger FYVE domain-containing protein 26 (Zfyve26).